Reading from the N-terminus, the 288-residue chain is Homoserine kinase (288 aa).

Position 79 to 89 (79 to 89 (PLARGLGSSSS)) interacts with ATP.

It belongs to the GHMP kinase family. Homoserine kinase subfamily.

It is found in the cytoplasm. It carries out the reaction L-homoserine + ATP = O-phospho-L-homoserine + ADP + H(+). The protein operates within amino-acid biosynthesis; L-threonine biosynthesis; L-threonine from L-aspartate: step 4/5. Functionally, catalyzes the ATP-dependent phosphorylation of L-homoserine to L-homoserine phosphate. This Streptococcus gordonii (strain Challis / ATCC 35105 / BCRC 15272 / CH1 / DL1 / V288) protein is Homoserine kinase.